The chain runs to 454 residues: Replicative DNA helicase DnaC (454 aa).

An SF4 helicase domain is found at 179-445 (RKGDITGIPT…NKFVNLERRF (267 aa)). 210–217 (ARPSVGKT) lines the ATP pocket.

Belongs to the helicase family. DnaB subfamily. As to quaternary structure, the DNA replisome assembles sequentially on oriC in this order; DnaA, DnaD, DnaB, DnaI-DnaC helicase. Monomer in the absence of ATP, in its presence forms a probable homohexamer which is not active as a helicase in vitro. Interacts separately and simultaneously with helicase loaders DnaB and DnaI. Interaction with DnaB does not require ATP. Interaction with DnaI requires ATP, probably forms a DnaC(6):DnaI(6) complex, which is not active as a helicase.

The protein localises to the cytoplasm. It localises to the nucleoid. The catalysed reaction is Couples ATP hydrolysis with the unwinding of duplex DNA at the replication fork by translocating in the 5'-3' direction. This creates two antiparallel DNA single strands (ssDNA). The leading ssDNA polymer is the template for DNA polymerase III holoenzyme which synthesizes a continuous strand.. It catalyses the reaction ATP + H2O = ADP + phosphate + H(+). The main replicative DNA helicase, it participates in initiation and elongation during chromosome replication. Travels ahead of the DNA replisome, separating dsDNA into templates for DNA synthesis. The monomer has helicase activity in the presence of DnaI which is further increased by DnaB; the purified oligomeric form (probably a DnaC hexamer) does not have helicase activity in vitro, nor does the DnaC(6):DnaI(6) complex. The direction was not determined but is probably 5'-3'. Helicase activity requires an rNTP and is inactive with dNTPs. Has weak ATPase activity as a monomer, as an oligomer has ATPase activity which is stimulated by single-stranded (ss)DNA and further stimulated by DnaI and more by DnaB. Its function is as follows. Deletion of a single T residue in the promoter region (a run of 8 Ts becomes 7 Ts) decreases the helicase levels by 50%, decreasing DNA replication inititation during fast growth in rich medium. Suppresses the synthetic lethality of a dnaA1-yabA deletion for growth on rich medium. The chain is Replicative DNA helicase DnaC from Bacillus subtilis (strain 168).